A 478-amino-acid chain; its full sequence is Spindle defective protein 3 (478 aa).

Residues 1 to 24 (MDQMTVEEKILEHQELEDGSSSFR) are Cytoplasmic-facing. A helical membrane pass occupies residues 25–45 (WLVSSTVIAIGGATVALYISG). Over 46 to 52 (KIDWKIP) the chain is Extracellular. A helical membrane pass occupies residues 53–73 (AIEAGLALTAGGTITCGYLWF). At 74–478 (KKRVKTVRKL…LRRVDDDIIE (405 aa)) the chain is on the cytoplasmic side.

The protein localises to the mitochondrion. It is found in the mitochondrion outer membrane. In the first mitotic division in embryos, required for mitotic spindle alignment and asymmetric cell division. Required for motor-driven chromosome movement and homolog searching within the nucleus, and subsequently ensures homologous chromosome pairing during the prophase stage of meiosis. The polypeptide is Spindle defective protein 3 (Caenorhabditis elegans).